The primary structure comprises 66 residues: Large ribosomal subunit protein bL35 (66 aa).

It belongs to the bacterial ribosomal protein bL35 family.

The protein is Large ribosomal subunit protein bL35 of Rhodopseudomonas palustris (strain BisB18).